The following is a 413-amino-acid chain: Ureide permease 5 (413 aa).

Residues methionine 1–alanine 18 lie on the Extracellular side of the membrane. Residues isoleucine 19–leucine 39 traverse the membrane as a helical segment. At glutamate 40–tyrosine 50 the chain is on the cytoplasmic side. A helical membrane pass occupies residues leucine 51 to isoleucine 71. The Extracellular segment spans residues glycine 72–asparagine 91. Residues tryptophan 92–threonine 112 traverse the membrane as a helical segment. The Cytoplasmic portion of the chain corresponds to glutamine 113–serine 115. A helical membrane pass occupies residues leucine 116–glycine 136. Over threonine 137–arginine 149 the chain is Extracellular. The helical transmembrane segment at alanine 150–valine 170 threads the bilayer. Residues histidine 171 to methionine 240 lie on the Cytoplasmic side of the membrane. Position 232–239 (alanine 232–serine 239) interacts with ATP. The chain crosses the membrane as a helical span at residues valine 241–phenylalanine 261. Residues asparagine 262–lysine 278 are Extracellular-facing. Residues leucine 279–leucine 299 traverse the membrane as a helical segment. Residues asparagine 300–arginine 326 lie on the Cytoplasmic side of the membrane. Residues glycine 327–glycine 347 form a helical membrane-spanning segment. Residues glutamine 348–tyrosine 352 are Extracellular-facing. The helical transmembrane segment at alanine 353–phenylalanine 373 threads the bilayer. The Cytoplasmic portion of the chain corresponds to glycine 374–tyrosine 384. Residues alanine 385–alanine 405 traverse the membrane as a helical segment. Residues glycine 406–threonine 413 lie on the Extracellular side of the membrane.

It belongs to the plant ureide permease (TC 2.A.7.19) family. In terms of tissue distribution, expressed in lateral roots, rosette leaves, stems, stipules, flower stigma, pedicels and the connective tissue between pollen sacks.

Its subcellular location is the membrane. Functionally, proton-coupled transporter that transports a wide spectrum of oxo derivatives of heterocyclic nitrogen compounds, including allantoin, uric acid and xanthine, but not adenine. Mediates transport of uracil and 5-fluorouracil (a toxic uracil analog). Proton-coupled transporter that transports a wide spectrum of oxo derivatives of heterocyclic nitrogen compounds, including allantoin, xanthine and uracil. The chain is Ureide permease 5 from Arabidopsis thaliana (Mouse-ear cress).